The following is a 478-amino-acid chain: Pyruvate kinase (478 aa).

Residue arginine 35 participates in substrate binding. K(+)-binding residues include asparagine 37, serine 39, and aspartate 69. 37–40 contacts ATP; sequence NMSH. ATP-binding residues include arginine 76 and lysine 157. Glutamate 219 lines the Mg(2+) pocket. Residues glycine 242, aspartate 243, and threonine 275 each contribute to the substrate site. Aspartate 243 is a Mg(2+) binding site.

The protein belongs to the pyruvate kinase family. In terms of assembly, homotetramer. Requires Mg(2+) as cofactor. K(+) serves as cofactor.

The catalysed reaction is pyruvate + ATP = phosphoenolpyruvate + ADP + H(+). It participates in carbohydrate degradation; glycolysis; pyruvate from D-glyceraldehyde 3-phosphate: step 5/5. This Methylorubrum extorquens (strain ATCC 14718 / DSM 1338 / JCM 2805 / NCIMB 9133 / AM1) (Methylobacterium extorquens) protein is Pyruvate kinase (pyk).